The primary structure comprises 284 residues: 4-hydroxy-3-methylbut-2-enyl diphosphate reductase (284 aa).

Residue Cys12 participates in [4Fe-4S] cluster binding. Positions 40 and 72 each coordinate (2E)-4-hydroxy-3-methylbut-2-enyl diphosphate. 2 residues coordinate dimethylallyl diphosphate: His40 and His72. His40 and His72 together coordinate isopentenyl diphosphate. [4Fe-4S] cluster is bound at residue Cys94. His122 lines the (2E)-4-hydroxy-3-methylbut-2-enyl diphosphate pocket. His122 serves as a coordination point for dimethylallyl diphosphate. His122 contacts isopentenyl diphosphate. Glu124 serves as the catalytic Proton donor. (2E)-4-hydroxy-3-methylbut-2-enyl diphosphate is bound at residue Thr161. Cys193 provides a ligand contact to [4Fe-4S] cluster. (2E)-4-hydroxy-3-methylbut-2-enyl diphosphate contacts are provided by Ser221, Asn223, and Ser264. Residues Ser221, Asn223, and Ser264 each coordinate dimethylallyl diphosphate. Residues Ser221, Asn223, and Ser264 each contribute to the isopentenyl diphosphate site.

The protein belongs to the IspH family. [4Fe-4S] cluster is required as a cofactor.

It carries out the reaction isopentenyl diphosphate + 2 oxidized [2Fe-2S]-[ferredoxin] + H2O = (2E)-4-hydroxy-3-methylbut-2-enyl diphosphate + 2 reduced [2Fe-2S]-[ferredoxin] + 2 H(+). The catalysed reaction is dimethylallyl diphosphate + 2 oxidized [2Fe-2S]-[ferredoxin] + H2O = (2E)-4-hydroxy-3-methylbut-2-enyl diphosphate + 2 reduced [2Fe-2S]-[ferredoxin] + 2 H(+). It functions in the pathway isoprenoid biosynthesis; dimethylallyl diphosphate biosynthesis; dimethylallyl diphosphate from (2E)-4-hydroxy-3-methylbutenyl diphosphate: step 1/1. It participates in isoprenoid biosynthesis; isopentenyl diphosphate biosynthesis via DXP pathway; isopentenyl diphosphate from 1-deoxy-D-xylulose 5-phosphate: step 6/6. Catalyzes the conversion of 1-hydroxy-2-methyl-2-(E)-butenyl 4-diphosphate (HMBPP) into a mixture of isopentenyl diphosphate (IPP) and dimethylallyl diphosphate (DMAPP). Acts in the terminal step of the DOXP/MEP pathway for isoprenoid precursor biosynthesis. This chain is 4-hydroxy-3-methylbut-2-enyl diphosphate reductase, found in Dehalococcoides mccartyi (strain ATCC BAA-2266 / KCTC 15142 / 195) (Dehalococcoides ethenogenes (strain 195)).